Reading from the N-terminus, the 104-residue chain is L-rhamnose mutarotase (104 aa).

Y18 contributes to the substrate binding site. Residue H22 is the Proton donor of the active site. Substrate contacts are provided by residues Y41 and 76 to 77 (WW).

The protein belongs to the rhamnose mutarotase family. As to quaternary structure, homodimer.

The protein resides in the cytoplasm. The catalysed reaction is alpha-L-rhamnose = beta-L-rhamnose. It participates in carbohydrate metabolism; L-rhamnose metabolism. Its function is as follows. Involved in the anomeric conversion of L-rhamnose. This chain is L-rhamnose mutarotase, found in Listeria monocytogenes serovar 1/2a (strain ATCC BAA-679 / EGD-e).